We begin with the raw amino-acid sequence, 502 residues long: Cytochrome P450 71A8 (502 aa).

The chain crosses the membrane as a helical span at residues 16–36 (IISHTLAFQALVSLILLISIT). The segment at 93 to 119 (PVSSRRRPRGNHENSRSRLRRPRGSRS) is disordered. C447 is a heme binding site.

The protein belongs to the cytochrome P450 family. Heme serves as cofactor.

The protein localises to the membrane. The chain is Cytochrome P450 71A8 (CYP71A8) from Mentha piperita (Peppermint).